The primary structure comprises 960 residues: Probable RNA-binding protein 19 (960 aa).

An RRM 1 domain is found at 2–79; sequence SRLIVKNLPN…SRITVEFCKS (78 aa). Disordered stretches follow at residues 85–119 and 149–294; these read KPRA…KKKK and WAND…TTCH. Phosphoserine occurs at positions 174, 176, and 180. A compositionally biased stretch (acidic residues) spans 176–194; that stretch reads SGQESEEEGAGEDLEEEAS. A compositionally biased stretch (basic and acidic residues) spans 273-286; that stretch reads RPPEARAETEKPAN. RRM domains are found at residues 294 to 369 and 402 to 480; these read HTVK…REKN and GRLF…PSTI. Residue K481 forms a Glycyl lysine isopeptide (Lys-Gly) (interchain with G-Cter in SUMO2) linkage. Positions 491–513 are disordered; that stretch reads LGSSSYKKKKEAQDKANSASSHN. The RRM 4 domain maps to 587 to 659; the sequence is TVILVKNLPA…VPLYLEWAPV (73 aa). Residues 667-729 form a disordered region; it reads PQKKKLQDTP…EEEEEESLPG (63 aa). 2 stretches are compositionally biased toward acidic residues: residues 689–706 and 714–726; these read TVPD…EEGA and EEEE…EEES. RRM domains are found at residues 730 to 811 and 832 to 912; these read CTLF…ISER and SKIL…WADS. Phosphoserine is present on residues S936, S949, and S951.

Belongs to the RRM MRD1 family. Expressed in the crypts of Lieberkuhn of the intestine and in intestinal neoplasia (at protein level).

The protein localises to the nucleus. It localises to the nucleolus. The protein resides in the nucleoplasm. Its subcellular location is the cytoplasm. It is found in the chromosome. In terms of biological role, plays a role in embryo pre-implantation development. This chain is Probable RNA-binding protein 19 (RBM19), found in Homo sapiens (Human).